A 339-amino-acid polypeptide reads, in one-letter code: Outer membrane protein assembly factor BamC (339 aa).

An N-terminal signal peptide occupies residues 1-19; it reads MKFSRQLVLGSLAVLVLSA. Cys20 is lipidated: N-palmitoyl cysteine. Cys20 carries the S-diacylglycerol cysteine lipid modification.

The protein belongs to the BamC family. In terms of assembly, part of the Bam complex.

The protein localises to the cell outer membrane. In terms of biological role, part of the outer membrane protein assembly complex, which is involved in assembly and insertion of beta-barrel proteins into the outer membrane. The sequence is that of Outer membrane protein assembly factor BamC from Vibrio cholerae serotype O1 (strain ATCC 39315 / El Tor Inaba N16961).